We begin with the raw amino-acid sequence, 181 residues long: Alkyl hydroperoxide reductase AhpD (181 aa).

The active-site Proton donor is the cysteine 131. Cysteine 131 and cysteine 134 form a disulfide bridge. The active-site Cysteine sulfenic acid (-SOH) intermediate is cysteine 134.

The protein belongs to the AhpD family.

It catalyses the reaction N(6)-[(R)-dihydrolipoyl]-L-lysyl-[lipoyl-carrier protein] + a hydroperoxide = N(6)-[(R)-lipoyl]-L-lysyl-[lipoyl-carrier protein] + an alcohol + H2O. Its function is as follows. Antioxidant protein with alkyl hydroperoxidase activity. Required for the reduction of the AhpC active site cysteine residues and for the regeneration of the AhpC enzyme activity. The sequence is that of Alkyl hydroperoxide reductase AhpD from Rhodopseudomonas palustris (strain BisB18).